Reading from the N-terminus, the 274-residue chain is Diaminopimelate epimerase (274 aa).

The substrate site is built by Asn11, Gln44, and Asn64. Catalysis depends on Cys73, which acts as the Proton donor. Substrate-binding positions include 74–75, Asn157, Asn190, and 208–209; these read GN and ER. Residue Cys217 is the Proton acceptor of the active site. A substrate-binding site is contributed by 218-219; that stretch reads GS.

The protein belongs to the diaminopimelate epimerase family. In terms of assembly, homodimer.

The protein resides in the cytoplasm. It carries out the reaction (2S,6S)-2,6-diaminopimelate = meso-2,6-diaminopimelate. It functions in the pathway amino-acid biosynthesis; L-lysine biosynthesis via DAP pathway; DL-2,6-diaminopimelate from LL-2,6-diaminopimelate: step 1/1. Functionally, catalyzes the stereoinversion of LL-2,6-diaminopimelate (L,L-DAP) to meso-diaminopimelate (meso-DAP), a precursor of L-lysine and an essential component of the bacterial peptidoglycan. The polypeptide is Diaminopimelate epimerase (Shigella boydii serotype 18 (strain CDC 3083-94 / BS512)).